The sequence spans 138 residues: Translation initiation factor 5A (138 aa).

A Hypusine modification is found at lysine 37.

Belongs to the eIF-5A family.

It localises to the cytoplasm. Its function is as follows. Functions by promoting the formation of the first peptide bond. The polypeptide is Translation initiation factor 5A (eif5a) (Pyrococcus horikoshii (strain ATCC 700860 / DSM 12428 / JCM 9974 / NBRC 100139 / OT-3)).